A 166-amino-acid chain; its full sequence is Interferon gamma (166 aa).

Residues 1 to 23 (MKYTSYFLALLLCGLLGFSGSYG) form the signal peptide. Glutamine 24 bears the Pyrrolidone carboxylic acid mark. Asparagine 39 and asparagine 106 each carry an N-linked (GlcNAc...) asparagine glycan.

This sequence belongs to the type II (or gamma) interferon family. Homodimer. Interacts with IFNGR1 (via extracellular domain); this interaction promotes IFNGR1 dimerization. In terms of tissue distribution, released primarily from activated T lymphocytes.

It localises to the secreted. Functionally, type II interferon produced by immune cells such as T-cells and NK cells that plays crucial roles in antimicrobial, antiviral, and antitumor responses by activating effector immune cells and enhancing antigen presentation. Primarily signals through the JAK-STAT pathway after interaction with its receptor IFNGR1 to affect gene regulation. Upon IFNG binding, IFNGR1 intracellular domain opens out to allow association of downstream signaling components JAK2, JAK1 and STAT1, leading to STAT1 activation, nuclear translocation and transcription of IFNG-regulated genes. Many of the induced genes are transcription factors such as IRF1 that are able to further drive regulation of a next wave of transcription. Plays a role in class I antigen presentation pathway by inducing a replacement of catalytic proteasome subunits with immunoproteasome subunits. In turn, increases the quantity, quality, and repertoire of peptides for class I MHC loading. Increases the efficiency of peptide generation also by inducing the expression of activator PA28 that associates with the proteasome and alters its proteolytic cleavage preference. Up-regulates as well MHC II complexes on the cell surface by promoting expression of several key molecules such as cathepsins B/CTSB, H/CTSH, and L/CTSL. Participates in the regulation of hematopoietic stem cells during development and under homeostatic conditions by affecting their development, quiescence, and differentiation. The sequence is that of Interferon gamma (IFNG) from Bos taurus (Bovine).